The following is a 627-amino-acid chain: tRNA uridine 5-carboxymethylaminomethyl modification enzyme MnmG (627 aa).

Residues 13–18 (GGGHAG), Val-125, and Ser-180 contribute to the FAD site. 274–288 (GPRYCPSIEDKVVRF) contributes to the NAD(+) binding site. Gln-371 provides a ligand contact to FAD.

This sequence belongs to the MnmG family. As to quaternary structure, homodimer. Heterotetramer of two MnmE and two MnmG subunits. FAD serves as cofactor.

The protein resides in the cytoplasm. Functionally, NAD-binding protein involved in the addition of a carboxymethylaminomethyl (cmnm) group at the wobble position (U34) of certain tRNAs, forming tRNA-cmnm(5)s(2)U34. This chain is tRNA uridine 5-carboxymethylaminomethyl modification enzyme MnmG, found in Francisella tularensis subsp. holarctica (strain FTNF002-00 / FTA).